The primary structure comprises 50 residues: Large ribosomal subunit protein eL40 (50 aa).

This sequence belongs to the eukaryotic ribosomal protein eL40 family.

This is Large ribosomal subunit protein eL40 from Aeropyrum pernix (strain ATCC 700893 / DSM 11879 / JCM 9820 / NBRC 100138 / K1).